The following is a 317-amino-acid chain: Nicotianamine synthase (317 aa).

It belongs to the nicotianamine synthase (NAS)-like family. As to quaternary structure, homomultimer. Leaves and roots.

The catalysed reaction is 3 S-adenosyl-L-methionine = nicotianamine + 3 S-methyl-5'-thioadenosine + 3 H(+). Its function is as follows. Synthesizes nicotianamine, a polyamine that serves as a sensor for the physiological iron status within the plant, and/or might be involved in the transport of iron. The polypeptide is Nicotianamine synthase (CHLN) (Solanum lycopersicum (Tomato)).